The following is a 540-amino-acid chain: Chaperonin GroEL (540 aa).

ATP is bound by residues 30–33, 87–91, Gly-414, 479–481, and Asp-495; these read TLGP, DGTTT, and NAL.

It belongs to the chaperonin (HSP60) family. As to quaternary structure, forms a cylinder of 14 subunits composed of two heptameric rings stacked back-to-back. Interacts with the co-chaperonin GroES.

Its subcellular location is the cytoplasm. The catalysed reaction is ATP + H2O + a folded polypeptide = ADP + phosphate + an unfolded polypeptide.. Its function is as follows. Together with its co-chaperonin GroES, plays an essential role in assisting protein folding. The GroEL-GroES system forms a nano-cage that allows encapsulation of the non-native substrate proteins and provides a physical environment optimized to promote and accelerate protein folding. This is Chaperonin GroEL from Rubrobacter xylanophilus (strain DSM 9941 / JCM 11954 / NBRC 16129 / PRD-1).